Reading from the N-terminus, the 152-residue chain is Ribosome maturation factor RimP (152 aa).

The protein belongs to the RimP family.

Its subcellular location is the cytoplasm. In terms of biological role, required for maturation of 30S ribosomal subunits. This Erwinia tasmaniensis (strain DSM 17950 / CFBP 7177 / CIP 109463 / NCPPB 4357 / Et1/99) protein is Ribosome maturation factor RimP.